The chain runs to 427 residues: 12-alpha,13-alpha-dihydroxyfumitremorgin C prenyltransferase (427 aa).

Glu94 contributes to the substrate binding site. Residues Arg105, Lys192, Tyr194, Tyr268, Gln353, Tyr355, Tyr419, and Tyr423 each coordinate dimethylallyl diphosphate.

It belongs to the tryptophan dimethylallyltransferase family.

It catalyses the reaction 12alpha,13alpha-dihydroxyfumitremorgin C + dimethylallyl diphosphate = fumitremorgin B + diphosphate. The protein operates within mycotoxin biosynthesis. In terms of biological role, 12-alpha,13-alpha-dihydroxyfumitremorgin C prenyltransferase; part of the gene cluster that mediates the biosynthesis of fumitremorgins, indole alkaloids that carry not only intriguing chemical structures, but also interesting biological and pharmacological activities. The biosynthesis of fumitremorgin-type alkaloids begins by condensation of the two amino acids L-tryptophan and L-proline to brevianamide F, catalyzed by the non-ribosomal peptide synthetase ftmA. Brevianamide F is then prenylated by the prenyltransferase ftmPT1/ftmB in the presence of dimethylallyl diphosphate, resulting in the formation of tryprostatin B. The three cytochrome P450 monooxygenases, ftmP450-1/ftmC, ftmP450-2/ftmE and ftmP450-3/FtmG, are responsible for the conversion of tryprostatin B to 6-hydroxytryprostatin B, tryprostatin A to fumitremorgin C and fumitremorgin C to 12,13-dihydroxyfumitremorgin C, respectively. The putative methyltransferase ftmMT/ftmD is expected for the conversion of 6-hydroxytryprostatin B to tryprostatin A. FtmPT2/FtmH catalyzes the prenylation of 12,13-dihydroxyfumitre-morgin C in the presence of dimethylallyl diphosphate, resulting in the formation of fumitremorgin B. Fumitremorgin B is further converted to verruculogen by ftmOx1/ftmF via the insertion of an endoperoxide bond between the two prenyl moieties. In some fungal species, verruculogen is further converted to fumitremorgin A, but the enzymes involved in this step have not been identified yet. This Aspergillus fumigatus (Neosartorya fumigata) protein is 12-alpha,13-alpha-dihydroxyfumitremorgin C prenyltransferase.